The sequence spans 507 residues: ATP synthase subunit alpha (507 aa).

Position 170–177 (170–177) interacts with ATP; the sequence is GDRKTGKT.

This sequence belongs to the ATPase alpha/beta chains family. As to quaternary structure, F-type ATPases have 2 components, CF(1) - the catalytic core - and CF(0) - the membrane proton channel. CF(1) has five subunits: alpha(3), beta(3), gamma(1), delta(1), epsilon(1). CF(0) has three main subunits: a(1), b(2) and c(9-12). The alpha and beta chains form an alternating ring which encloses part of the gamma chain. CF(1) is attached to CF(0) by a central stalk formed by the gamma and epsilon chains, while a peripheral stalk is formed by the delta and b chains.

Its subcellular location is the cell inner membrane. The catalysed reaction is ATP + H2O + 4 H(+)(in) = ADP + phosphate + 5 H(+)(out). Produces ATP from ADP in the presence of a proton gradient across the membrane. The alpha chain is a regulatory subunit. The chain is ATP synthase subunit alpha from Anaplasma marginale (strain Florida).